Consider the following 735-residue polypeptide: MLKLFSAFRKDKIWDFDGGIHPPEMKTQSNGTPLRQVPLAPRFVIPLKQHIGAEGELCVSVGDRVLRGQALTRGRGRMLPVHAPTSGTVIAIAPHSTAHPSALAELSVIIDADGEDRWIEREGWSDYRAHSREALIERIHQYGVAGLGGAGFPTGVKLQGGGDKITTLIINAAECEPYITADDRLMQDCAAQIVEGIRILAHILQPREVLIGIEDNKPQAISMLRAVLADAHDISLRVIPTKYPSGGAKQLTQILTGKQVPHGGRSSDIGVLMQNVGTAYAVKRAVVDGEPITERVVTLTGEAVSRPGNVWARLGTPVRHLLNDAGFCPSADQMVIMGGPLMGFTLPWLDVPVVKITNCLLAPSVTEMGAPQEEKSCIRCSACADACPADLLPQQLYWFSKGQQHDKATAHHIADCIECGACAWVCPSNIPLVQYFRQEKAEINAIRLEEKRAAEAKARFEARQARLEREKAVRLARHKSAAVQPAAKDQDAIAAALARVKEKQAQATQPVVIQAGSLPDNSAVIAAREARKAQARAKQAAHPVADSALPGDDPRKAAVEAAIARAKARKQEQQAGSEPAEPVDPRKAAVEAAIARAKARKQEQQAGSEPVEAVDPRKAAVEAAIARAKARKQEQQAGGEPAEAVDPRKAAVEAAIARAKARKQEQQAGSEPAEPAAPRKAAVEAAIARAKARKQEQQAGSEPAEAVDPRKAAVAAAIARVQAKKAAQQQVVNED.

4Fe-4S ferredoxin-type domains are found at residues 368–397 (MGAP…QQLY) and 407–436 (KATA…VQYF). The [4Fe-4S] cluster site is built by Cys377, Cys380, Cys383, Cys387, Cys416, Cys419, Cys422, and Cys426. A disordered region spans residues 534–715 (QARAKQAAHP…AVDPRKAAVA (182 aa)). A compositionally biased stretch (low complexity) spans 666 to 689 (QQAGSEPAEPAAPRKAAVEAAIAR).

The protein belongs to the 4Fe4S bacterial-type ferredoxin family. RnfC subfamily. As to quaternary structure, the complex is composed of six subunits: RsxA, RsxB, RsxC, RsxD, RsxE and RsxG. Requires [4Fe-4S] cluster as cofactor.

Its subcellular location is the cell inner membrane. Part of a membrane-bound complex that couples electron transfer with translocation of ions across the membrane. Required to maintain the reduced state of SoxR. The protein is Ion-translocating oxidoreductase complex subunit C of Salmonella paratyphi B (strain ATCC BAA-1250 / SPB7).